The following is a 400-amino-acid chain: Putative zinc-binding protein ORF78 (400 aa).

The interval 9 to 33 (LPRKRRAVAQPRTRQPPPKVHREDT) is disordered.

The polypeptide is Putative zinc-binding protein ORF78 (ORF78) (Ictalurid herpesvirus 1 (strain Auburn) (IcHV-1)).